The chain runs to 172 residues: Gamma-crystallin-4 (172 aa).

Beta/gamma crystallin 'Greek key' domains follow at residues 1–37 (IFFY…RVES) and 38–80 (GNWI…RFIP). Positions 81–85 (HPHSQ) are connecting peptide. Beta/gamma crystallin 'Greek key' domains are found at residues 86 to 126 (YKMR…NVSD) and 127 to 169 (GHWM…RRVH).

This sequence belongs to the beta/gamma-crystallin family. In terms of assembly, monomer.

Its function is as follows. Crystallins are the dominant structural components of the vertebrate eye lens. This chain is Gamma-crystallin-4 (cryg4), found in Xenopus laevis (African clawed frog).